A 162-amino-acid polypeptide reads, in one-letter code: uncharacterized protein (162 aa).

5 helical membrane passes run 15 to 40 (TIYS…YFLL), 47 to 66 (ISML…TTAL), 76 to 98 (YSIL…FLVY), 105 to 124 (KWLG…DPLL), and 128 to 150 (GYAV…WLVI).

It localises to the cell membrane. This is an uncharacterized protein from Archaeoglobus fulgidus (strain ATCC 49558 / DSM 4304 / JCM 9628 / NBRC 100126 / VC-16).